The primary structure comprises 162 residues: Neuritin-like protein (162 aa).

The signal sequence occupies residues 1-32 (MMCNCCHCHWRRRCQRLPCALTLLLLLPLAVA). Residue Ala-136 is the site of GPI-anchor amidated alanine attachment. Positions 137 to 162 (PALAPAPAPVLLAAALALACLLGPLA) are cleaved as a propeptide — removed in mature form.

Belongs to the neuritin family.

It localises to the cell membrane. The polypeptide is Neuritin-like protein (Nrn1l) (Mus musculus (Mouse)).